Reading from the N-terminus, the 189-residue chain is Large ribosomal subunit protein uL5 (189 aa).

The protein belongs to the universal ribosomal protein uL5 family. As to quaternary structure, part of the 50S ribosomal subunit; part of the 5S rRNA/L5/L18/L25 subcomplex. Contacts the 5S rRNA and the P site tRNA. Forms a bridge to the 30S subunit in the 70S ribosome.

Functionally, this is one of the proteins that bind and probably mediate the attachment of the 5S RNA into the large ribosomal subunit, where it forms part of the central protuberance. In the 70S ribosome it contacts protein S13 of the 30S subunit (bridge B1b), connecting the 2 subunits; this bridge is implicated in subunit movement. Contacts the P site tRNA; the 5S rRNA and some of its associated proteins might help stabilize positioning of ribosome-bound tRNAs. In Parafrankia sp. (strain EAN1pec), this protein is Large ribosomal subunit protein uL5.